Here is a 228-residue protein sequence, read N- to C-terminus: LexA repressor (228 aa).

Positions 28–48 form a DNA-binding region, H-T-H motif; the sequence is IREIGEALDIRSTNGVNDHLK. Active-site for autocatalytic cleavage activity residues include S146 and K183.

Belongs to the peptidase S24 family. Homodimer.

It catalyses the reaction Hydrolysis of Ala-|-Gly bond in repressor LexA.. Functionally, represses a number of genes involved in the response to DNA damage (SOS response), including recA and lexA. In the presence of single-stranded DNA, RecA interacts with LexA causing an autocatalytic cleavage which disrupts the DNA-binding part of LexA, leading to derepression of the SOS regulon and eventually DNA repair. This Anaeromyxobacter dehalogenans (strain 2CP-1 / ATCC BAA-258) protein is LexA repressor.